The following is a 270-amino-acid chain: MSDLHNESIFITGGGSGLGLALVERFIEEGAQVATLELSAAKVASLRQRFGEHILAVEGNVTCYADYQRAVDQILTRSGKLDCFIGNAGIWDHNASLVNTPAETLETGFHELFNVNVLGYLLGAKACAPALIAGEGSMIFTLSNAAWYPGGGGPLYTASKHAATGLIRQLAYELAPKVRVNGVGPCGMASDLRGPQALGQSETSIMQSLTPEKIAAILPLQFFPQPADFTGPYVMLASRRNNRALSGVMINADAGLAIRGIRHVAAGLDL.

NAD(+) is bound at residue 10–34; the sequence is FITGGGSGLGLALVERFIEEGAQVA. Residue serine 143 participates in substrate binding. Tyrosine 156 acts as the Proton acceptor in catalysis.

The protein belongs to the short-chain dehydrogenases/reductases (SDR) family.

It carries out the reaction 3-(cis-5,6-dihydroxycyclohexa-1,3-dien-1-yl)propanoate + NAD(+) = 3-(2,3-dihydroxyphenyl)propanoate + NADH + H(+). The catalysed reaction is (2E)-3-(cis-5,6-dihydroxycyclohexa-1,3-dien-1-yl)prop-2-enoate + NAD(+) = (2E)-3-(2,3-dihydroxyphenyl)prop-2-enoate + NADH + H(+). The protein operates within aromatic compound metabolism; 3-phenylpropanoate degradation. In terms of biological role, converts 3-phenylpropionate-dihydrodiol (PP-dihydrodiol) and cinnamic acid-dihydrodiol (CI-dihydrodiol) into 3-(2,3-dihydroxylphenyl)propanoic acid (DHPP) and 2,3-dihydroxicinnamic acid (DHCI), respectively. The protein is 3-phenylpropionate-dihydrodiol/cinnamic acid-dihydrodiol dehydrogenase of Escherichia coli O157:H7.